Consider the following 323-residue polypeptide: Glyoxylate/hydroxypyruvate reductase B (323 aa).

The tract at residues 37–62 is disordered; sequence AEHGGAGARRRHDRLQQHGGSSAAGE. Catalysis depends on residues arginine 236 and glutamate 265. The active-site Proton donor is histidine 284.

This sequence belongs to the D-isomer specific 2-hydroxyacid dehydrogenase family. GhrB subfamily. In terms of assembly, homodimer.

The protein resides in the cytoplasm. It carries out the reaction glycolate + NADP(+) = glyoxylate + NADPH + H(+). It catalyses the reaction (R)-glycerate + NAD(+) = 3-hydroxypyruvate + NADH + H(+). The enzyme catalyses (R)-glycerate + NADP(+) = 3-hydroxypyruvate + NADPH + H(+). In terms of biological role, catalyzes the NADPH-dependent reduction of glyoxylate and hydroxypyruvate into glycolate and glycerate, respectively. This Enterobacter agglomerans (Erwinia herbicola) protein is Glyoxylate/hydroxypyruvate reductase B (tkrA).